Consider the following 411-residue polypeptide: Secretion apparatus protein BsaZ (411 aa).

4 helical membrane passes run 28–48 (IVAL…VDLT), 80–100 (IAAP…LVQS), 137–157 (ALLY…LYHA), and 175–195 (IVLT…VLIL). A disordered region spans residues 341-411 (AANRGGPPPE…APARTGDQNA (71 aa)). The span at 370-404 (DACADNAFPDDAPPGAAAPNAGSPDGPAPDGGAPA) shows a compositional bias: low complexity.

This sequence belongs to the type III secretion exporter family.

Its subcellular location is the cell membrane. Its function is as follows. Part of the bsa type III secretion system, is involved in the intracellular replication of invading bacteria inside the host cell. Probably necessary for the lysis of the vacuole membrane and escape into the host cell cytoplasm. This Burkholderia pseudomallei (strain 1710b) protein is Secretion apparatus protein BsaZ (bsaZ).